A 109-amino-acid chain; its full sequence is UPF0122 protein ABC2295 (109 aa).

This sequence belongs to the UPF0122 family.

Its function is as follows. Might take part in the signal recognition particle (SRP) pathway. This is inferred from the conservation of its genetic proximity to ftsY/ffh. May be a regulatory protein. In Shouchella clausii (strain KSM-K16) (Alkalihalobacillus clausii), this protein is UPF0122 protein ABC2295.